Consider the following 363-residue polypeptide: Mitochondrial RNA-splicing protein MRS1 (363 aa).

Homodimer. Forms a ribonucleoprotein complex composed of maturase bI3 and 2 dimers of MRS1 that assemble around the bI3 RNA.

The protein localises to the mitochondrion matrix. In terms of biological role, function in mitochondrial RNA splicing in the excision of mitochondrial group I introns aI5 beta from COX1 and bI3 from COB transcripts and thus would be involved in obtaining the correct structure of the intron, to allow the RNA catalyzed reactions to occur. This chain is Mitochondrial RNA-splicing protein MRS1 (MRS1), found in Saccharomyces cerevisiae (strain ATCC 204508 / S288c) (Baker's yeast).